Reading from the N-terminus, the 250-residue chain is L-cystine transport system ATP-binding protein TcyN (250 aa).

Positions 4–244 (IEVKNLVKKF…PEQPRTRQFL (241 aa)) constitute an ABC transporter domain. 36 to 43 (GPSGSGKT) contacts ATP.

The protein belongs to the ABC transporter superfamily. As to quaternary structure, the complex is composed of two ATP-binding proteins (TcyN), two transmembrane proteins (TcyL) and a solute-binding protein (TcyJ).

Its subcellular location is the cell inner membrane. The catalysed reaction is L-cystine(out) + ATP + H2O = L-cystine(in) + ADP + phosphate + H(+). It catalyses the reaction D-cystine(out) + ATP + H2O = D-cystine(in) + ADP + phosphate + H(+). With respect to regulation, the TcyJLN system is inhibited by L-cystine, L-cysteine, DL-2,6-diaminopimelic acid and L-cystathionine, and is stimulated by D-cysteine. In terms of biological role, part of the ABC transporter complex TcyJLN involved in L-cystine import. This high affinity cystine transporter is involved in resistance to oxidative stress by forming a L-cysteine/L-cystine shuttle system with the EamA transporter, which exports L-cysteine as reducing equivalents to the periplasm to prevent the cells from oxidative stress. Exported L-cysteine can reduce the periplasmic hydrogen peroxide to water, and then generated L-cystine is imported back into the cytoplasm via the TcyJLN complex. Functions at low cystine concentrations. The system can also transport L-cysteine, diaminopimelic acid (DAP), djenkolate, lanthionine, D-cystine, homocystine, and it mediates accumulation of the toxic compounds L-selenaproline (SCA) and L-selenocystine (SeCys). Could also facilitate threonine efflux. Responsible for energy coupling to the transport system. This chain is L-cystine transport system ATP-binding protein TcyN, found in Escherichia coli (strain K12).